The primary structure comprises 332 residues: Adenine deaminase (332 aa).

Zn(2+) is bound by residues His-14, His-16, and His-194. Glu-197 functions as the Proton donor in the catalytic mechanism. Asp-275 serves as a coordination point for Zn(2+). Position 276 (Asp-276) interacts with substrate.

The protein belongs to the metallo-dependent hydrolases superfamily. Adenosine and AMP deaminases family. Adenine deaminase type 2 subfamily. It depends on Zn(2+) as a cofactor.

It catalyses the reaction adenine + H2O + H(+) = hypoxanthine + NH4(+). Functionally, catalyzes the hydrolytic deamination of adenine to hypoxanthine. Plays an important role in the purine salvage pathway and in nitrogen catabolism. The sequence is that of Adenine deaminase from Psychrobacter cryohalolentis (strain ATCC BAA-1226 / DSM 17306 / VKM B-2378 / K5).